A 451-amino-acid chain; its full sequence is POU domain, class 3, transcription factor 1 (451 aa).

Disordered regions lie at residues 1 to 21 (MATT…GTGP), 69 to 114 (AHPQ…GFHA), 134 to 154 (AHHL…HQPQ), 186 to 253 (GLHH…PSSD), and 395 to 451 (KRMT…GSVQ). Gly residues-rich tracts occupy residues 11-20 (GPGGGAGGTG), 76-85 (TGGGGGGDWA), and 95-112 (AGGG…GGGF). Residues 134 to 145 (AHHLGPAMSPSP) are compositionally biased toward low complexity. Residues 190–199 (ALHEDGHEAQ) show a composition bias toward basic and acidic residues. Low complexity predominate over residues 220 to 232 (AGGLHAAAAHLHP). The POU-specific domain maps to 247-321 (EDAPSSDDLE…LLNKWLEETD (75 aa)). The homeobox DNA-binding region spans 339 to 398 (KRKKRTSIEVGVKGALESHFLKCPKPSAHEITGLADSLQLEKEVVRVWFCNRRQKEKRMT). The span at 427–436 (PSAPPPPPPA) shows a compositional bias: pro residues.

Belongs to the POU transcription factor family. Class-3 subfamily. Neural tissues and testis.

Its subcellular location is the nucleus. Its function is as follows. Transcription factor that binds to the octamer motif (5'-ATTTGCAT-3'). Acts as a transcriptional activator when binding cooperatively with SOX4, SOX11, or SOX12 to gene promoters. Acts as a transcriptional repressor of myelin-specific genes. The chain is POU domain, class 3, transcription factor 1 (Pou3f1) from Rattus norvegicus (Rat).